A 72-amino-acid chain; its full sequence is Large ribosomal subunit protein bL31 (72 aa).

The protein belongs to the bacterial ribosomal protein bL31 family. Type A subfamily. As to quaternary structure, part of the 50S ribosomal subunit.

Functionally, binds the 23S rRNA. This is Large ribosomal subunit protein bL31 from Maricaulis maris (strain MCS10) (Caulobacter maris).